We begin with the raw amino-acid sequence, 311 residues long: Porphobilinogen deaminase (311 aa).

Cys-240 is subject to S-(dipyrrolylmethanemethyl)cysteine.

This sequence belongs to the HMBS family. As to quaternary structure, monomer. Dipyrromethane serves as cofactor.

The enzyme catalyses 4 porphobilinogen + H2O = hydroxymethylbilane + 4 NH4(+). It functions in the pathway porphyrin-containing compound metabolism; protoporphyrin-IX biosynthesis; coproporphyrinogen-III from 5-aminolevulinate: step 2/4. Tetrapolymerization of the monopyrrole PBG into the hydroxymethylbilane pre-uroporphyrinogen in several discrete steps. The chain is Porphobilinogen deaminase from Natranaerobius thermophilus (strain ATCC BAA-1301 / DSM 18059 / JW/NM-WN-LF).